Reading from the N-terminus, the 518-residue chain is Probable triacylglyceride transporter BCG_1471c (518 aa).

The next 14 helical transmembrane spans lie at 7–27 (VAISAGSLAVLLGALDTYVVV), 46–66 (RITWIVTMYLLGYIAAMPLLG), 76–96 (LMLQVSLAGFIIGSVVTALAG), 110–130 (IQGVASGALLPITLALGADLW), 144–164 (AAQELGSVLGPLYGIFIVWLL), 170–190 (VFWINVPLTAIAMVMIHFSLP), 201–221 (VDLVGGLLLALALGLAVIGLY), 230–250 (VLPDYGAPLLVGALVAAVAFF), 270–290 (PFLSALGASVAAGAALMVTLV), 308–328 (AGMLLWFLIALPIGAVTGGWI), 337–357 (VAFAGLLIAAYGYWLISHWPV), 379–401 (LVVAGLGLGLVIGPLSSATLRVV), 408–428 (IASAAVVVARMTGMLIGVAAL), and 475–495 (IFTITAIVCVFGAVLGLLISG).

This sequence belongs to the major facilitator superfamily.

The protein localises to the cell inner membrane. Its activity is regulated as follows. Inhibited by CCCP and valinomycin. In association with lipoprotein LprG probably transports triacylglycerides (TAG) across the inner cell membrane into the periplasm; TAG probably regulates lipid metabolism and growth regulation. Confers resistance to several drugs such as rifampicin, clofazimine and novobiocin; is also part of the oxidative stress response and is needed to maintain normal growth characteristics. Probably an efflux transporter, involved in maintaining correct cell wall permeability. Probably required with LprG for normal surface localization of lipoarabinomannan (LAM). Required for optimal growth on cholesterol. This chain is Probable triacylglyceride transporter BCG_1471c, found in Mycobacterium bovis (strain BCG / Pasteur 1173P2).